The chain runs to 385 residues: Heterogeneous nuclear ribonucleoprotein 87F (385 aa).

RRM domains follow at residues 24–101 (RKLF…RAVP) and 115–192 (KKLF…KAIA). Disordered regions lie at residues 192 to 289 (AKQD…WNGG) and 305 to 385 (GNGG…NRRY). Composition is skewed to gly residues over residues 199 to 289 (QGGG…WNGG) and 305 to 317 (GNGGGGGGGGGFG). Polar residues predominate over residues 319 to 336 (EYQQSYGGGPQRNSNFGN). 2 stretches are compositionally biased toward gly residues: residues 344–362 (QGGGGGGFNKGNQGGGQGF) and 369–385 (TGGGGQGGNMGGGNRRY).

The protein resides in the nucleus. Its subcellular location is the cytoplasm. Its function is as follows. This protein is a component of ribonucleosomes. Could be needed to organize a concentration gradient of a dorsalizing morphogen (Dm) originating in the germinal vesicle. This is Heterogeneous nuclear ribonucleoprotein 87F (Hrb87F) from Drosophila melanogaster (Fruit fly).